Here is a 78-residue protein sequence, read N- to C-terminus: Putative DNA-binding protein MT0521 (78 aa).

Positions 24 to 45 form a DNA-binding region, H-T-H motif; it reads LLTVAEVAALMRVSKMTVYRLV.

In Mycobacterium tuberculosis (strain CDC 1551 / Oshkosh), this protein is Putative DNA-binding protein MT0521.